The sequence spans 994 residues: Integrator complex subunit 5 (994 aa).

A disordered region spans residues 559 to 586 (NSNNNNELCNGKDYGKRTKLEPGEDKVD). Positions 571–583 (DYGKRTKLEPGED) are enriched in basic and acidic residues. The next 2 membrane-spanning stretches (helical) occupy residues 769–786 (YSLV…DVMY) and 810–826 (AFIN…LIAG).

It belongs to the Integrator subunit 5 family. Belongs to the multiprotein complex Integrator, at least composed of IntS1, IntS2, IntS3, IntS4, omd/IntS5, IntS6, defl/IntS7, IntS8, IntS9, IntS10, IntS11, IntS12, asun/IntS13, IntS14 and IntS15. The core complex associates with protein phosphatase 2A subunits mts/PP2A and Pp2A-29B, to form the Integrator-PP2A (INTAC) complex.

The protein resides in the nucleus membrane. The protein localises to the nucleus. Its subcellular location is the cytoplasm. Its function is as follows. Component of the integrator complex, a multiprotein complex that terminates RNA polymerase II (Pol II) transcription in the promoter-proximal region of genes. The integrator complex provides a quality checkpoint during transcription elongation by driving premature transcription termination of transcripts that are unfavorably configured for transcriptional elongation: the complex terminates transcription by (1) catalyzing dephosphorylation of the C-terminal domain (CTD) of Pol II subunit Polr2A/Rbp1 and Spt5, and (2) degrading the exiting nascent RNA transcript via endonuclease activity. The integrator complex is also involved in the 3'-end processing of the U7 snRNA, and also the spliceosomal snRNAs U1, U2, U4 and U5. In Drosophila melanogaster (Fruit fly), this protein is Integrator complex subunit 5.